We begin with the raw amino-acid sequence, 434 residues long: Glutamate-1-semialdehyde 2,1-aminomutase 1 (434 aa).

K270 carries the N6-(pyridoxal phosphate)lysine modification.

The protein belongs to the class-III pyridoxal-phosphate-dependent aminotransferase family. HemL subfamily. As to quaternary structure, homodimer. The cofactor is pyridoxal 5'-phosphate.

The protein resides in the cytoplasm. The catalysed reaction is (S)-4-amino-5-oxopentanoate = 5-aminolevulinate. Its pathway is porphyrin-containing compound metabolism; protoporphyrin-IX biosynthesis; 5-aminolevulinate from L-glutamyl-tRNA(Glu): step 2/2. In Bacillus thuringiensis (strain Al Hakam), this protein is Glutamate-1-semialdehyde 2,1-aminomutase 1.